Consider the following 527-residue polypeptide: Succinate-semialdehyde dehydrogenase, mitochondrial (527 aa).

The transit peptide at 1-35 (MAMAMAMRRAAALGARHILAASSTSSSGVLLRRHM) directs the protein to the mitochondrion. NAD(+) is bound by residues arginine 208, 223-226 (KPSE), and 276-281 (GSTAVG). Arginine 208 is a binding site for substrate. The active-site Proton acceptor is the glutamate 298. Residues arginine 326, cysteine 332, and serine 489 each coordinate substrate. Cysteine 332 acts as the Nucleophile in catalysis. Cysteines 332 and 334 form a disulfide.

The protein belongs to the aldehyde dehydrogenase family. Homotetramer.

Its subcellular location is the mitochondrion matrix. The enzyme catalyses succinate semialdehyde + NAD(+) + H2O = succinate + NADH + 2 H(+). Its pathway is amino-acid degradation; 4-aminobutanoate degradation. With respect to regulation, redox-regulated. Inhibited under oxydizing conditions. In terms of biological role, oxidizes specifically succinate semialdehyde. Involved in plant response to environmental stress by preventing the accumulation of reactive oxygen species. The protein is Succinate-semialdehyde dehydrogenase, mitochondrial (ALDH5F1) of Oryza sativa subsp. japonica (Rice).